The primary structure comprises 150 residues: Large ribosomal subunit protein bL9 (150 aa).

It belongs to the bacterial ribosomal protein bL9 family.

Functionally, binds to the 23S rRNA. This chain is Large ribosomal subunit protein bL9, found in Idiomarina loihiensis (strain ATCC BAA-735 / DSM 15497 / L2-TR).